Reading from the N-terminus, the 197-residue chain is Transcription factor FapR (197 aa).

This sequence belongs to the FapR family.

Its function is as follows. Transcriptional factor involved in regulation of membrane lipid biosynthesis by repressing genes involved in fatty acid and phospholipid metabolism. The chain is Transcription factor FapR from Bacillus cytotoxicus (strain DSM 22905 / CIP 110041 / 391-98 / NVH 391-98).